A 204-amino-acid chain; its full sequence is Dephospho-CoA kinase (204 aa).

The DPCK domain occupies 4-201; sequence VIGLTGGIAS…EKYLAMCKKN (198 aa). 12–17 lines the ATP pocket; the sequence is ASGKTT.

It belongs to the CoaE family.

Its subcellular location is the cytoplasm. It carries out the reaction 3'-dephospho-CoA + ATP = ADP + CoA + H(+). It functions in the pathway cofactor biosynthesis; coenzyme A biosynthesis; CoA from (R)-pantothenate: step 5/5. In terms of biological role, catalyzes the phosphorylation of the 3'-hydroxyl group of dephosphocoenzyme A to form coenzyme A. The sequence is that of Dephospho-CoA kinase from Vibrio parahaemolyticus serotype O3:K6 (strain RIMD 2210633).